The primary structure comprises 386 residues: S-adenosylmethionine synthase (386 aa).

Glutamate 8 serves as a coordination point for Mg(2+). An ATP-binding site is contributed by histidine 14. Glutamate 42 is a K(+) binding site. L-methionine contacts are provided by glutamate 55 and glutamine 98. ATP-binding positions include 166 to 168, 234 to 237, aspartate 245, 251 to 252, alanine 268, lysine 272, and lysine 276; these read DGK, SGRF, and RK. Residue aspartate 245 coordinates L-methionine. Lysine 276 contacts L-methionine.

Belongs to the AdoMet synthase family. Homotetramer. Requires Mn(2+) as cofactor. It depends on Mg(2+) as a cofactor. Co(2+) is required as a cofactor. K(+) serves as cofactor.

It localises to the cytoplasm. It catalyses the reaction L-methionine + ATP + H2O = S-adenosyl-L-methionine + phosphate + diphosphate. It participates in amino-acid biosynthesis; S-adenosyl-L-methionine biosynthesis; S-adenosyl-L-methionine from L-methionine: step 1/1. Its function is as follows. Catalyzes the formation of S-adenosylmethionine from methionine and ATP. The reaction comprises two steps that are both catalyzed by the same enzyme: formation of S-adenosylmethionine (AdoMet) and triphosphate, and subsequent hydrolysis of the triphosphate. The protein is S-adenosylmethionine synthase (METK) of Ostreococcus tauri.